Consider the following 385-residue polypeptide: Homoserine O-succinyltransferase (385 aa).

An AB hydrolase-1 domain is found at 45 to 355; sequence NAVLVCHALN…SHGHDAFLLD (311 aa). Residue S151 is the Nucleophile of the active site. R221 serves as a coordination point for substrate. Active-site residues include D316 and H349. D350 contributes to the substrate binding site.

The protein belongs to the AB hydrolase superfamily. MetX family. As to quaternary structure, homodimer.

It is found in the cytoplasm. The catalysed reaction is L-homoserine + succinyl-CoA = O-succinyl-L-homoserine + CoA. It functions in the pathway amino-acid biosynthesis; L-methionine biosynthesis via de novo pathway; O-succinyl-L-homoserine from L-homoserine: step 1/1. Functionally, transfers a succinyl group from succinyl-CoA to L-homoserine, forming succinyl-L-homoserine. The chain is Homoserine O-succinyltransferase from Herminiimonas arsenicoxydans.